The following is a 270-amino-acid chain: Pyrroline-5-carboxylate reductase (270 aa).

Belongs to the pyrroline-5-carboxylate reductase family.

Its subcellular location is the cytoplasm. It carries out the reaction L-proline + NADP(+) = (S)-1-pyrroline-5-carboxylate + NADPH + 2 H(+). It catalyses the reaction L-proline + NAD(+) = (S)-1-pyrroline-5-carboxylate + NADH + 2 H(+). It participates in amino-acid biosynthesis; L-proline biosynthesis; L-proline from L-glutamate 5-semialdehyde: step 1/1. Its function is as follows. Catalyzes the reduction of 1-pyrroline-5-carboxylate (PCA) to L-proline. The polypeptide is Pyrroline-5-carboxylate reductase (Methanosarcina acetivorans (strain ATCC 35395 / DSM 2834 / JCM 12185 / C2A)).